We begin with the raw amino-acid sequence, 109 residues long: Large ribosomal subunit protein eL30 (109 aa).

Belongs to the eukaryotic ribosomal protein eL30 family.

The chain is Large ribosomal subunit protein eL30 (RPL30) from Yarrowia lipolytica (strain CLIB 122 / E 150) (Yeast).